A 172-amino-acid chain; its full sequence is Protein PLASTID REDOX INSENSITIVE 2, chloroplastic (172 aa).

The transit peptide at 1–54 (MAARLWAAAVAPATLNPPLLTLSASSSPSSSRLRRSVLGRLRSRAPRPADFVCR) directs the protein to the chloroplast.

It is found in the plastid. Its subcellular location is the chloroplast stroma. It localises to the chloroplast nucleoid. Required for the activity of the plastid-encoded RNA polymerase (PEP) and full expression of genes transcribed by PEP. The sequence is that of Protein PLASTID REDOX INSENSITIVE 2, chloroplastic from Oryza sativa subsp. japonica (Rice).